A 465-amino-acid chain; its full sequence is Gamma-aminobutyric acid receptor subunit alpha-6 (465 aa).

The first 19 residues, 1 to 19 (MALLIAWVCVAVSIEKALG), serve as a signal peptide directing secretion. Residues 20–243 (GQGDGGDLYS…FHLQRKMGYF (224 aa)) lie on the Extracellular side of the membrane. N-linked (GlcNAc...) asparagine glycosylation occurs at N31. A 4-aminobutanoate-binding site is contributed by R84. N-linked (GlcNAc...) asparagine glycans are attached at residues N128 and N141. T147 lines the 4-aminobutanoate pocket. An intrachain disulfide couples C156 to C170. A helical membrane pass occupies residues 244 to 264 (MIQIYTPCIMTVILSQVSFWI). Topologically, residues 265–270 (NKESVP) are cytoplasmic. Residues 271 to 290 (ARTVFGITTVLTMTTLSISA) form a helical membrane-spanning segment. Residues 291-304 (RHSLPKVSYATAMD) lie on the Extracellular side of the membrane. A helical membrane pass occupies residues 305-325 (WFIAVCFAFVFSALIEFAAVN). Over 326–424 (YFTNLQTQRA…GTSKIDQYSR (99 aa)) the chain is Cytoplasmic. The tract at residues 392–415 (NSASQCQPVSAPPPAPPAPPPVGG) is disordered. A compositionally biased stretch (pro residues) spans 401-413 (SAPPPAPPAPPPV). Residues 425-445 (ILFPVAFAGFNLVYWVVYLSK) form a helical membrane-spanning segment. At 446–465 (DTMEFFEPTAMHLRNDHQSN) the chain is on the extracellular side.

The protein belongs to the ligand-gated ion channel (TC 1.A.9) family. Gamma-aminobutyric acid receptor (TC 1.A.9.5) subfamily. GABRA6 sub-subfamily. As to quaternary structure, heteropentamer, formed by a combination of alpha (GABRA1-6), beta (GABRB1-3), gamma (GABRG1-3), delta (GABRD), epsilon (GABRE), rho (GABRR1-3), pi (GABRP) and theta (GABRQ) chains, each subunit exhibiting distinct physiological and pharmacological properties. As to expression, expressed in brain, in cerebellar granule cells.

The protein resides in the postsynaptic cell membrane. It is found in the cell membrane. It carries out the reaction chloride(in) = chloride(out). Its function is as follows. Alpha subunit of the heteropentameric ligand-gated chloride channel gated by gamma-aminobutyric acid (GABA), a major inhibitory neurotransmitter in the brain. GABA-gated chloride channels, also named GABA(A) receptors (GABAAR), consist of five subunits arranged around a central pore and contain GABA active binding site(s) located at the alpha and beta subunit interface(s). When activated by GABA, GABAARs selectively allow the flow of chloride anions across the cell membrane down their electrochemical gradient. This is Gamma-aminobutyric acid receptor subunit alpha-6 (GABRA6) from Gallus gallus (Chicken).